A 193-amino-acid chain; its full sequence is uncharacterized protein (193 aa).

A helical membrane pass occupies residues 119-143 (LAGSLLAATGMTLGIFGMGITGTCW).

The protein resides in the mitochondrion membrane. This is an uncharacterized protein from Saccharomyces cerevisiae (strain ATCC 204508 / S288c) (Baker's yeast).